Consider the following 100-residue polypeptide: Large ribosomal subunit protein uL23 (100 aa).

This sequence belongs to the universal ribosomal protein uL23 family. In terms of assembly, part of the 50S ribosomal subunit. Contacts protein L29, and trigger factor when it is bound to the ribosome.

In terms of biological role, one of the early assembly proteins it binds 23S rRNA. One of the proteins that surrounds the polypeptide exit tunnel on the outside of the ribosome. Forms the main docking site for trigger factor binding to the ribosome. The sequence is that of Large ribosomal subunit protein uL23 from Prochlorococcus marinus subsp. pastoris (strain CCMP1986 / NIES-2087 / MED4).